The chain runs to 529 residues: Delayed-rectifier potassium channel regulatory subunit KCNS1 (529 aa).

Residues Met-1–Leu-217 are Cytoplasmic-facing. A helical transmembrane segment spans residues Pro-218–Ile-239. The Extracellular segment spans residues His-240–Pro-270. The helical transmembrane segment at Val-271–Leu-293 threads the bilayer. Residues Ala-294 to Pro-304 lie on the Cytoplasmic side of the membrane. The chain crosses the membrane as a helical span at residues Leu-305–Ala-322. Topologically, residues Gly-323–Leu-340 are extracellular. A helical; Voltage-sensor transmembrane segment spans residues Gly-341–His-361. At Ser-362 to Tyr-376 the chain is on the cytoplasmic side. Residues Arg-377–Tyr-398 form a helical membrane-spanning segment. Topologically, residues Thr-399 to Ile-411 are extracellular. Positions Pro-412–Thr-423 form an intramembrane region, helical. Residues Thr-424 to Asp-429 carry the Selectivity filter motif. An intramembrane segment occupies Thr-424 to Val-431. Residues Pro-432–Lys-438 lie on the Extracellular side of the membrane. Residues Leu-439–Tyr-467 form a helical membrane-spanning segment. The Cytoplasmic portion of the chain corresponds to Arg-468–Tyr-529. The disordered stretch occupies residues Gly-494–Tyr-529. Residues Thr-502–Asp-514 are compositionally biased toward basic and acidic residues.

This sequence belongs to the potassium channel family. S (TC 1.A.1.2) subfamily. Kv9.1/KCNS1 sub-subfamily. Heterotetramer with KCNB1. Heterotetramer with KCNB2. Does not form homomultimers.

Its subcellular location is the cell membrane. Functionally, potassium channel regulatory subunit that modulate the delayed rectifier voltage-gated potassium channel activity of KCNB1 and KCNB2 by altering their kinetics, expression levels, and shifting the half-inactivation potential to more polarized values. While it does not form functional channels on its own, it can form functional heterotetrameric channels with KCNB1 and KCNB2. Each regulatory subunit has unique regulatory properties that can lead to extensive inhibition, significant changes in kinetics, and/or substantial shifts in the voltage dependencies of the inactivation process. This is Delayed-rectifier potassium channel regulatory subunit KCNS1 from Aotus nancymaae (Ma's night monkey).